Consider the following 1958-residue polypeptide: Autophagy-related protein 2 (1958 aa).

Positions 30–121 (RFLSYVLKRT…SLDTLTLDFT (92 aa)) constitute a Chorein N-terminal domain. Disordered stretches follow at residues 286–319 (QRKP…GNDY) and 360–412 (LSQP…GIPV). The span at 303–315 (SVSSSTSTASTSS) shows a compositional bias: low complexity. A compositionally biased stretch (polar residues) spans 397 to 406 (ETPTPETKPQ).

It belongs to the ATG2 family.

It is found in the preautophagosomal structure membrane. The protein resides in the endoplasmic reticulum membrane. The enzyme catalyses a 1,2-diacyl-sn-glycero-3-phosphocholine(in) = a 1,2-diacyl-sn-glycero-3-phosphocholine(out). It catalyses the reaction a 1,2-diacyl-sn-glycero-3-phospho-L-serine(in) = a 1,2-diacyl-sn-glycero-3-phospho-L-serine(out). The catalysed reaction is a 1,2-diacyl-sn-glycero-3-phosphoethanolamine(in) = a 1,2-diacyl-sn-glycero-3-phosphoethanolamine(out). Functionally, lipid transfer protein required for autophagosome completion and peroxisome degradation. Tethers the edge of the isolation membrane (IM) to the endoplasmic reticulum (ER) and mediates direct lipid transfer from ER to IM for IM expansion. ATG2 binds to the ER exit site (ERES), which is the membrane source for autophagosome formation, using basic residues in its N-terminal region (NR) and to the expanding edge of the IM through its C-terminal region. The latter binding is assisted by an ATG18-PtdIns3P interaction. ATG2 then extracts phospholipids from the membrane source using its NR and transfers them to ATG9 to the IM through its predicted beta-sheet-rich structure for membrane expansion. The sequence is that of Autophagy-related protein 2 (ATG2) from Cryptococcus neoformans var. neoformans serotype D (strain JEC21 / ATCC MYA-565) (Filobasidiella neoformans).